A 312-amino-acid polypeptide reads, in one-letter code: 26S proteasome non-ATPase regulatory subunit 14 (312 aa).

Residues 33–168 (VYISSLALLK…IDAFRTINPQ (136 aa)) form the MPN domain. Positions 115, 117, and 128 each coordinate Zn(2+). The JAMM motif signature appears at 115 to 128 (HSHPGFGCWLSGVD).

This sequence belongs to the peptidase M67A family. PSMD14 subfamily. In terms of assembly, component of the 19S regulatory cap of the 26S proteasome.

Metalloprotease component of the 26S proteasome that specifically cleaves 'Lys-63'-linked polyubiquitin chains. The 26S proteasome is involved in the ATP-dependent degradation of ubiquitinated proteins. The function of the 'Lys-63'-specific deubiquitination of the proteasome is unclear. The protein is 26S proteasome non-ATPase regulatory subunit 14 (rpn-11) of Caenorhabditis elegans.